The following is a 143-amino-acid chain: Histone H2AX (143 aa).

A disordered region spans residues methionine 1 to alanine 22. N-acetylserine is present on serine 2. The residue at position 2 (serine 2) is a Phosphoserine. Lysine 6 and lysine 10 each carry N6-acetyllysine. A compositionally biased stretch (basic residues) spans threonine 7–serine 19. Residue lysine 10 is modified to N6-lactoyllysine; alternate. Residues lysine 14 and lysine 16 each participate in a glycyl lysine isopeptide (Lys-Gly) (interchain with G-Cter in ubiquitin) cross-link. Position 37 is an N6-acetyllysine; by CREBBP and EP300 (lysine 37). A Glycyl lysine isopeptide (Lys-Gly) (interchain with G-Cter in ubiquitin) cross-link involves residue lysine 120. Residues serine 121 and serine 122 each carry the phosphoserine modification. The disordered stretch occupies residues serine 121 to tyrosine 143. Residues lysine 128 and lysine 135 each participate in a glycyl lysine isopeptide (Lys-Gly) (interchain with G-Cter in SUMO2) cross-link. Serine 137 carries the phosphoserine modification. Serine 140 is modified (phosphoserine; by ATM, ATR and PRKDC). Positions serine 140 to glutamine 141 match the [ST]-Q motif motif. Residue tyrosine 143 is modified to Phosphotyrosine; by WSTF.

The protein belongs to the histone H2A family. As to quaternary structure, the nucleosome is a histone octamer containing two molecules each of H2A, H2B, H3 and H4 assembled in one H3-H4 heterotetramer and two H2A-H2B heterodimers. The octamer wraps approximately 147 bp of DNA. Interacts with numerous proteins required for DNA damage signaling and repair when phosphorylated on Ser-140. These include MDC1, BRCA1 and the MRN complex, composed of MRE11, RAD50, and NBN. Interaction with the MRN complex is mediated at least in part by NBN. Also interacts with DHX9/NDHII when phosphorylated on Ser-140 and MCPH1 when phosphorylated at Ser-140 or Tyr-143. Interacts with ARRB2; the interaction is detected in the nucleus upon OR1D2 stimulation. Interacts with WRAP53/TCAB1. Interacts with TP53BP1. Interacts with HDGFL2. Post-translationally, phosphorylated on Ser-140 (to form gamma-H2AX or H2AX139ph) in response to DNA double strand breaks (DSBs) generated by exogenous genotoxic agents, by stalled replication forks, by meiotic recombination events and during immunoglobulin class switching in lymphocytes. Phosphorylation can extend up to several thousand nucleosomes from the actual site of the DSB and may mark the surrounding chromatin for recruitment of proteins required for DNA damage signaling and repair. Widespread phosphorylation may also serve to amplify the damage signal or aid repair of persistent lesions. Phosphorylation of Ser-140 (H2AX139ph) in response to ionizing radiation is mediated by both ATM and PRKDC while defects in DNA replication induce Ser-140 phosphorylation (H2AX139ph) subsequent to activation of ATR and PRKDC. Dephosphorylation of Ser-140 by PP2A is required for DNA DSB repair. In meiosis, Ser-140 phosphorylation (H2AX139ph) first occurs at synaptonemal complexes during leptotene and is an ATM-dependent response to the formation of programmed DSBs by SPO11. Ser-140 phosphorylation (H2AX139ph) subsequently occurs at unsynapsed regions of both autosomes and the XY bivalent during zygotene and is ATR- and BRCA1-dependent. Ser-140 phosphorylation (H2AX139ph) may also be required for transcriptional repression of unsynapsed chromatin and meiotic sex chromosome inactivation (MSCI), whereby the X and Y chromosomes condense in pachytene to form the heterochromatic XY-body. During immunoglobulin class switch recombination in lymphocytes, Ser-140 phosphorylation (H2AX139ph) at sites of DNA-recombination requires the activation-induced cytidine deaminase AICDA. Phosphorylation at Tyr-143 (H2AXY142ph) by BAZ1B/WSTF determines the relative recruitment of either DNA repair or pro-apoptotic factors. Phosphorylation at Tyr-143 (H2AXY142ph) favors the recruitment of APBB1/FE65 and pro-apoptosis factors such as MAPK8/JNK1, triggering apoptosis. In contrast, dephosphorylation of Tyr-143 by EYA proteins (EYA1, EYA2, EYA3 or EYA4) favors the recruitment of MDC1-containing DNA repair complexes to the tail of phosphorylated Ser-140 (H2AX139ph). Phosphorylated by VRK1. Monoubiquitination of Lys-120 (H2AXK119ub) by RING1 and RNF2/RING2 complex gives a specific tag for epigenetic transcriptional repression. Following DNA double-strand breaks (DSBs), it is ubiquitinated through 'Lys-63' linkage of ubiquitin moieties by the E2 ligase UBE2N and the E3 ligases RNF8 and RNF168, leading to the recruitment of repair proteins to sites of DNA damage. Ubiquitination at Lys-14 and Lys-16 (H2AK13Ub and H2AK15Ub, respectively) in response to DNA damage is initiated by RNF168 that mediates monoubiquitination at these 2 sites, and 'Lys-63'-linked ubiquitin are then conjugated to monoubiquitin; RNF8 is able to extend 'Lys-63'-linked ubiquitin chains in vitro. H2AK119Ub and ionizing radiation-induced 'Lys-63'-linked ubiquitination (H2AK13Ub and H2AK15Ub) are distinct events. In terms of processing, acetylation at Lys-6 (H2AXK5ac) by KAT5 component of the NuA4 histone acetyltransferase complex promotes NBN/NBS1 assembly at the sites of DNA damage. Acetylation at Lys-37 increases in S and G2 phases. This modification has been proposed to be important for DNA double-strand break repair. In terms of tissue distribution, most abundant in testis, thymus and spleen.

The protein resides in the nucleus. It is found in the chromosome. Its function is as follows. Variant histone H2A which replaces conventional H2A in a subset of nucleosomes. Nucleosomes wrap and compact DNA into chromatin, limiting DNA accessibility to the cellular machineries which require DNA as a template. Histones thereby play a central role in transcription regulation, DNA repair, DNA replication and chromosomal stability. DNA accessibility is regulated via a complex set of post-translational modifications of histones, also called histone code, and nucleosome remodeling. Required for checkpoint-mediated arrest of cell cycle progression in response to low doses of ionizing radiation and for efficient repair of DNA double strand breaks (DSBs) specifically when modified by C-terminal phosphorylation. The protein is Histone H2AX of Mus musculus (Mouse).